The primary structure comprises 143 residues: Sporulation-specific cell division protein SsgB (143 aa).

It belongs to the SsgA family. As to quaternary structure, interacts with SsgA. Interacts with FtsZ (via N-terminus).

The protein resides in the cell septum. In terms of biological role, involved in sporulation-specific cell division. Required for early stages of sporulation. Important in the process of growth cessation prior to sporulation-specific cell division. Recruits cell division protein FtsZ to the future septum sites and tethers the contractile ring structure (Z ring) to the cytoplasmic membrane during sporulation. Stimulates polymerization and filament length of FtsZ in vitro. The protein is Sporulation-specific cell division protein SsgB of Frankia casuarinae (strain DSM 45818 / CECT 9043 / HFP020203 / CcI3).